A 584-amino-acid polypeptide reads, in one-letter code: Actin-binding protein IPP (584 aa).

Residues 37–104 (CDVQLQVGKE…IYTGVVNIAV (68 aa)) form the BTB domain. Kelch repeat units follow at residues 296 to 343 (YTRL…VVGG), 344 to 390 (MVYA…VCYG), 391 to 437 (AIYA…EMQG), 439 to 485 (IYAV…ALND), 487 to 533 (IYAI…TVNG), and 535 to 583 (LYVS…GVAV).

In terms of tissue distribution, expression seems confined to tissues derived from trophectoderm and primitive endoderm.

It localises to the cytoplasm. The protein localises to the cytoskeleton. May play a role in organizing the actin cytoskeleton. The sequence is that of Actin-binding protein IPP (Ipp) from Mus musculus (Mouse).